The sequence spans 166 residues: MSYVALGVDPGLLRTGWAVVEYDGLCNVRYIDSGIVKTASQGSLSARLEKIHRGISDVIEKVNPSVAVLEKVFVNNNPYSSLNLAYCRGALILTLALKGLFIVEFAPSVLKKRITGNGRATKAQVKYMVEQLLGLDPCLSKYSDLYDALALAASVTRYDIMEAKGT.

Residues Asp9, Glu70, and Asp144 contribute to the active site. Asp9, Glu70, and Asp144 together coordinate Mg(2+).

Belongs to the RuvC family. In terms of assembly, homodimer which binds Holliday junction (HJ) DNA. The HJ becomes 2-fold symmetrical on binding to RuvC with unstacked arms; it has a different conformation from HJ DNA in complex with RuvA. In the full resolvosome a probable DNA-RuvA(4)-RuvB(12)-RuvC(2) complex forms which resolves the HJ. Mg(2+) is required as a cofactor.

Its subcellular location is the cytoplasm. It catalyses the reaction Endonucleolytic cleavage at a junction such as a reciprocal single-stranded crossover between two homologous DNA duplexes (Holliday junction).. Functionally, the RuvA-RuvB-RuvC complex processes Holliday junction (HJ) DNA during genetic recombination and DNA repair. Endonuclease that resolves HJ intermediates. Cleaves cruciform DNA by making single-stranded nicks across the HJ at symmetrical positions within the homologous arms, yielding a 5'-phosphate and a 3'-hydroxyl group; requires a central core of homology in the junction. The consensus cleavage sequence is 5'-(A/T)TT(C/G)-3'. Cleavage occurs on the 3'-side of the TT dinucleotide at the point of strand exchange. HJ branch migration catalyzed by RuvA-RuvB allows RuvC to scan DNA until it finds its consensus sequence, where it cleaves and resolves the cruciform DNA. This is Crossover junction endodeoxyribonuclease RuvC from Neorickettsia sennetsu (strain ATCC VR-367 / Miyayama) (Ehrlichia sennetsu).